Here is a 116-residue protein sequence, read N- to C-terminus: Ly-6/neurotoxin-like protein 1 (116 aa).

Positions 1-20 are cleaved as a signal peptide; that stretch reads MTPLLTLILVVLMGLPLAQA. One can recognise a UPAR/Ly6 domain in the interval 21 to 105; that stretch reads LDCHVCAYNG…LATPATLALA (85 aa). Disulfide bonds link Cys-23-Cys-46, Cys-26-Cys-33, Cys-39-Cys-64, Cys-68-Cys-85, and Cys-86-Cys-91. Residue Asn-92 is the site of GPI-anchor amidated asparagine attachment. A propeptide spans 93 to 116 (removed in mature form); that stretch reads GAGLATPATLALAPILLATLWGLL.

Interacts with nAChRs containing alpha-4:beta-2 (CHRNA4:CHRNB2) and alpha-7 (CHRNA7) subunits. Interacts with CHRNA4 probably in the endoplasmic reticulum prior to nAChR pentameric assembly. Interacts with KCNA2/Potassium voltage-gated channel subfamily A member 2.

The protein resides in the cell membrane. The protein localises to the cell projection. It localises to the dendrite. It is found in the endoplasmic reticulum. In terms of biological role, acts in different tissues through interaction to nicotinic acetylcholine receptors (nAChRs). The proposed role as modulator of nAChR activity seems to be dependent on the nAChR subtype and stoichiometry, and to involve an effect on nAChR trafficking and its cell surface expression, and on single channel properties of the nAChR inserted in the plasma membrane. Modulates functional properties of nicotinic acetylcholine receptors (nAChRs) to prevent excessive excitation, and hence neurodegeneration. Enhances desensitization by increasing both the rate and extent of desensitization of alpha-4:beta-2-containing nAChRs and slowing recovery from desensitization. Promotes large amplitude ACh-evoked currents through alpha-4:beta-2 nAChRs. Is involved in regulation of the nAChR pentameric assembly in the endoplasmic reticulum. Shifts stoichiometry from high sensitivity alpha-4(2):beta-2(3) to low sensitivity alpha-4(3):beta-2(2) nAChR. In vitro modulates alpha-3:beta-4-containing nAChRs. Reduces cell surface expression of (alpha-3:beta-4)(2):beta-4 and (alpha-3:beta-4)(2):alpha-5 nAChRs suggesting an interaction with nAChR alpha-3(-):(+)beta-4 subunit interfaces and an allosteric mode. Corresponding single channel effects characterized by decreased unitary conductance, altered burst proportions and enhanced desensitization/inactivation seem to depend on nAChR alpha:alpha subunit interfaces and are greater in (alpha-3:beta-2)(2):alpha-3 when compared to (alpha-3:beta-2)(2):alpha-5 nAChRs. Prevents plasticity in the primary visual cortex late in life. This chain is Ly-6/neurotoxin-like protein 1, found in Pan troglodytes (Chimpanzee).